Here is a 1193-residue protein sequence, read N- to C-terminus: Magnesium-chelatase subunit H (1193 aa).

Belongs to the Mg-chelatase subunit H family.

It carries out the reaction protoporphyrin IX + Mg(2+) + ATP + H2O = Mg-protoporphyrin IX + ADP + phosphate + 3 H(+). It participates in porphyrin-containing compound metabolism; bacteriochlorophyll biosynthesis (light-independent). Functionally, involved in bacteriochlorophyll pigment biosynthesis; introduces a magnesium ion into protoporphyrin IX to yield Mg-protoroporphyrin IX. The chain is Magnesium-chelatase subunit H (bchH) from Cereibacter sphaeroides (strain ATCC 17023 / DSM 158 / JCM 6121 / CCUG 31486 / LMG 2827 / NBRC 12203 / NCIMB 8253 / ATH 2.4.1.) (Rhodobacter sphaeroides).